Here is a 349-residue protein sequence, read N- to C-terminus: Hydroxymethylglutaryl-CoA synthase (349 aa).

Residue aspartate 30 coordinates (3S)-3-hydroxy-3-methylglutaryl-CoA. Catalysis depends on glutamate 82, which acts as the Proton donor/acceptor. Cysteine 114 is a binding site for (3S)-3-hydroxy-3-methylglutaryl-CoA. Cysteine 114 serves as the catalytic Acyl-thioester intermediate. Position 203 (arginine 203) interacts with CoA. 2 residues coordinate (3S)-3-hydroxy-3-methylglutaryl-CoA: threonine 205 and histidine 238. The Proton donor/acceptor role is filled by histidine 238. Lysine 243 is a CoA binding site. (3S)-3-hydroxy-3-methylglutaryl-CoA contacts are provided by lysine 247, asparagine 270, and serine 300.

Belongs to the thiolase-like superfamily. Archaeal HMG-CoA synthase family. As to quaternary structure, interacts with acetoacetyl-CoA thiolase that catalyzes the precedent step in the pathway and with a DUF35 protein. The acetoacetyl-CoA thiolase/HMG-CoA synthase complex channels the intermediate via a fused CoA-binding site, which allows for efficient coupling of the endergonic thiolase reaction with the exergonic HMGCS reaction.

It catalyses the reaction acetoacetyl-CoA + acetyl-CoA + H2O = (3S)-3-hydroxy-3-methylglutaryl-CoA + CoA + H(+). It participates in metabolic intermediate biosynthesis; (R)-mevalonate biosynthesis; (R)-mevalonate from acetyl-CoA: step 2/3. Functionally, catalyzes the condensation of acetyl-CoA with acetoacetyl-CoA to form 3-hydroxy-3-methylglutaryl-CoA (HMG-CoA). Functions in the mevalonate (MVA) pathway leading to isopentenyl diphosphate (IPP), a key precursor for the biosynthesis of isoprenoid compounds that are building blocks of archaeal membrane lipids. This Methanothermococcus thermolithotrophicus (Methanococcus thermolithotrophicus) protein is Hydroxymethylglutaryl-CoA synthase.